Reading from the N-terminus, the 126-residue chain is Protein ApaG (126 aa).

Residues 2–126 (DVSQPRIQIQ…FRLAVPNILN (125 aa)) form the ApaG domain.

This Vibrio vulnificus (strain CMCP6) protein is Protein ApaG.